Here is a 78-residue protein sequence, read N- to C-terminus: Probable Fe(2+)-trafficking protein (78 aa).

Belongs to the Fe(2+)-trafficking protein family. Monomer.

Functionally, could be a mediator in iron transactions between iron acquisition and iron-requiring processes, such as synthesis and/or repair of Fe-S clusters in biosynthetic enzymes. This Wigglesworthia glossinidia brevipalpis protein is Probable Fe(2+)-trafficking protein.